The sequence spans 188 residues: UPF0461 protein C5orf24 homolog (188 aa).

S37 bears the Phosphoserine mark. A Glycyl lysine isopeptide (Lys-Gly) (interchain with G-Cter in SUMO2) cross-link involves residue K75. A compositionally biased stretch (basic residues) spans 80 to 92 (KKKNLNRSGKRGR). The segment at 80-141 (KKKNLNRSGK…AGYKVSPGRP (62 aa)) is disordered. Over residues 94-107 (SGTTKSAGYRTSTG) the composition is skewed to polar residues. Phosphoserine is present on residues S121 and S180. A Glycyl lysine isopeptide (Lys-Gly) (interchain with G-Cter in SUMO2) cross-link involves residue K184.

It belongs to the UPF0461 family.

This is UPF0461 protein C5orf24 homolog from Mus musculus (Mouse).